A 156-amino-acid chain; its full sequence is Ribonuclease P protein component (156 aa).

The tract at residues 126–156 (GLRKLGVTPGGGRSPAPRAHSGARPRTDARS) is disordered.

This sequence belongs to the RnpA family. In terms of assembly, consists of a catalytic RNA component (M1 or rnpB) and a protein subunit.

It carries out the reaction Endonucleolytic cleavage of RNA, removing 5'-extranucleotides from tRNA precursor.. Functionally, RNaseP catalyzes the removal of the 5'-leader sequence from pre-tRNA to produce the mature 5'-terminus. It can also cleave other RNA substrates such as 4.5S RNA. The protein component plays an auxiliary but essential role in vivo by binding to the 5'-leader sequence and broadening the substrate specificity of the ribozyme. This Nocardia farcinica (strain IFM 10152) protein is Ribonuclease P protein component.